The sequence spans 159 residues: uncharacterized protein (159 aa).

The HTH asnC-type domain occupies 6 to 66 (LSKKDWEIIK…YLRFDKLGYT (61 aa)). A DNA-binding region (H-T-H motif) is located at residues 25 to 44 (DAEIGRRIGLSKSAVRWRRI).

This is an uncharacterized protein from Pyrococcus horikoshii (strain ATCC 700860 / DSM 12428 / JCM 9974 / NBRC 100139 / OT-3).